Here is a 157-residue protein sequence, read N- to C-terminus: 2-C-methyl-D-erythritol 2,4-cyclodiphosphate synthase (157 aa).

Residues D8 and H10 each coordinate a divalent metal cation. Residues D8 to H10 and H34 to S35 each bind 4-CDP-2-C-methyl-D-erythritol 2-phosphate. Residue H42 participates in a divalent metal cation binding. Residues D56–G58, F61–D65, A100–A106, T132–E135, F139, and R142 contribute to the 4-CDP-2-C-methyl-D-erythritol 2-phosphate site.

This sequence belongs to the IspF family. Homotrimer. It depends on a divalent metal cation as a cofactor.

It carries out the reaction 4-CDP-2-C-methyl-D-erythritol 2-phosphate = 2-C-methyl-D-erythritol 2,4-cyclic diphosphate + CMP. It functions in the pathway isoprenoid biosynthesis; isopentenyl diphosphate biosynthesis via DXP pathway; isopentenyl diphosphate from 1-deoxy-D-xylulose 5-phosphate: step 4/6. In terms of biological role, involved in the biosynthesis of isopentenyl diphosphate (IPP) and dimethylallyl diphosphate (DMAPP), two major building blocks of isoprenoid compounds. Catalyzes the conversion of 4-diphosphocytidyl-2-C-methyl-D-erythritol 2-phosphate (CDP-ME2P) to 2-C-methyl-D-erythritol 2,4-cyclodiphosphate (ME-CPP) with a corresponding release of cytidine 5-monophosphate (CMP). This Serratia proteamaculans (strain 568) protein is 2-C-methyl-D-erythritol 2,4-cyclodiphosphate synthase.